Consider the following 164-residue polypeptide: Putative HTH-type transcriptional regulator ORF2 (164 aa).

An HTH rrf2-type domain is found at 2–131; sequence RLTTKGRYAV…SGISLADLVA (130 aa).

In Azotobacter vinelandii, this protein is Putative HTH-type transcriptional regulator ORF2.